We begin with the raw amino-acid sequence, 587 residues long: Aspartate--tRNA ligase (587 aa).

E174 lines the L-aspartate pocket. An aspartate region spans residues 198-201; sequence QITK. L-aspartate is bound at residue R220. Residues 220–222 and Q229 each bind ATP; that span reads RDE. H443 lines the L-aspartate pocket. E477 is a binding site for ATP. R484 is an L-aspartate binding site. Position 529-532 (529-532) interacts with ATP; that stretch reads GLDR.

Belongs to the class-II aminoacyl-tRNA synthetase family. Type 1 subfamily. As to quaternary structure, homodimer.

Its subcellular location is the cytoplasm. The enzyme catalyses tRNA(Asp) + L-aspartate + ATP = L-aspartyl-tRNA(Asp) + AMP + diphosphate. In terms of biological role, catalyzes the attachment of L-aspartate to tRNA(Asp) in a two-step reaction: L-aspartate is first activated by ATP to form Asp-AMP and then transferred to the acceptor end of tRNA(Asp). In Streptococcus pneumoniae (strain 70585), this protein is Aspartate--tRNA ligase.